A 125-amino-acid chain; its full sequence is Pullulanase secretion protein PulS (125 aa).

Residues methionine 1–glycine 17 form the signal peptide. Cysteine 18 carries the N-palmitoyl cysteine lipid modification. Cysteine 18 is lipidated: S-diacylglycerol cysteine.

The protein to E.chrysanthemi OutS.

It localises to the cell outer membrane. Functionally, involved in the secretion of pullulanase. The chain is Pullulanase secretion protein PulS (pulS) from Klebsiella pneumoniae.